Reading from the N-terminus, the 158-residue chain is Glutamyl-tRNA(Gln) amidotransferase subunit C, mitochondrial (158 aa).

Belongs to the GatC family. As to quaternary structure, subunit of the heterotrimeric GatCAB amidotransferase (AdT) complex, composed of A, B and C subunits.

It localises to the mitochondrion. The enzyme catalyses L-glutamyl-tRNA(Gln) + L-glutamine + ATP + H2O = L-glutaminyl-tRNA(Gln) + L-glutamate + ADP + phosphate + H(+). Functionally, allows the formation of correctly charged Gln-tRNA(Gln) through the transamidation of misacylated Glu-tRNA(Gln) in the mitochondria. The reaction takes place in the presence of glutamine and ATP through an activated gamma-phospho-Glu-tRNA(Gln). The chain is Glutamyl-tRNA(Gln) amidotransferase subunit C, mitochondrial from Drosophila grimshawi (Hawaiian fruit fly).